We begin with the raw amino-acid sequence, 274 residues long: 4-hydroxy-3-methylbut-2-enyl diphosphate reductase (274 aa).

Residue Cys12 participates in [4Fe-4S] cluster binding. The (2E)-4-hydroxy-3-methylbut-2-enyl diphosphate site is built by His36 and His70. 2 residues coordinate dimethylallyl diphosphate: His36 and His70. The isopentenyl diphosphate site is built by His36 and His70. A [4Fe-4S] cluster-binding site is contributed by Cys92. His120 contacts (2E)-4-hydroxy-3-methylbut-2-enyl diphosphate. Dimethylallyl diphosphate is bound at residue His120. His120 contributes to the isopentenyl diphosphate binding site. Glu122 serves as the catalytic Proton donor. Thr158 contacts (2E)-4-hydroxy-3-methylbut-2-enyl diphosphate. Cys186 provides a ligand contact to [4Fe-4S] cluster. The (2E)-4-hydroxy-3-methylbut-2-enyl diphosphate site is built by Ser214, Ser215, Asn216, and Ser258. Dimethylallyl diphosphate is bound by residues Ser214, Ser215, Asn216, and Ser258. 4 residues coordinate isopentenyl diphosphate: Ser214, Ser215, Asn216, and Ser258.

The protein belongs to the IspH family. Requires [4Fe-4S] cluster as cofactor.

It catalyses the reaction isopentenyl diphosphate + 2 oxidized [2Fe-2S]-[ferredoxin] + H2O = (2E)-4-hydroxy-3-methylbut-2-enyl diphosphate + 2 reduced [2Fe-2S]-[ferredoxin] + 2 H(+). The catalysed reaction is dimethylallyl diphosphate + 2 oxidized [2Fe-2S]-[ferredoxin] + H2O = (2E)-4-hydroxy-3-methylbut-2-enyl diphosphate + 2 reduced [2Fe-2S]-[ferredoxin] + 2 H(+). It functions in the pathway isoprenoid biosynthesis; dimethylallyl diphosphate biosynthesis; dimethylallyl diphosphate from (2E)-4-hydroxy-3-methylbutenyl diphosphate: step 1/1. It participates in isoprenoid biosynthesis; isopentenyl diphosphate biosynthesis via DXP pathway; isopentenyl diphosphate from 1-deoxy-D-xylulose 5-phosphate: step 6/6. Functionally, catalyzes the conversion of 1-hydroxy-2-methyl-2-(E)-butenyl 4-diphosphate (HMBPP) into a mixture of isopentenyl diphosphate (IPP) and dimethylallyl diphosphate (DMAPP). Acts in the terminal step of the DOXP/MEP pathway for isoprenoid precursor biosynthesis. The sequence is that of 4-hydroxy-3-methylbut-2-enyl diphosphate reductase from Helicobacter pylori (strain P12).